We begin with the raw amino-acid sequence, 97 residues long: Putative membrane protein insertion efficiency factor (97 aa).

The segment at 72–97 (VPGAEPDQEQHQCTPLCNHHSEDHSQ) is disordered.

The protein belongs to the UPF0161 family.

The protein localises to the cell inner membrane. Functionally, could be involved in insertion of integral membrane proteins into the membrane. The protein is Putative membrane protein insertion efficiency factor of Alcanivorax borkumensis (strain ATCC 700651 / DSM 11573 / NCIMB 13689 / SK2).